The primary structure comprises 95 residues: MSSGGLLLLLGLLTLWAELTPVSSRDRPKFCYLPAEPGECNAYMPSFYYDSASNKCKKFIYGGCRGNANNFKTRDECHHTCVASGKGIQPRIGSN.

The first 24 residues, 1-24 (MSSGGLLLLLGLLTLWAELTPVSS), serve as a signal peptide directing secretion. Positions 31-81 (CYLPAEPGECNAYMPSFYYDSASNKCKKFIYGGCRGNANNFKTRDECHHTC) constitute a BPTI/Kunitz inhibitor domain. Disulfide bonds link Cys-31–Cys-81, Cys-40–Cys-64, and Cys-56–Cys-77. A propeptide spanning residues 92–95 (IGSN) is cleaved from the precursor.

The protein belongs to the venom Kunitz-type family. In terms of tissue distribution, expressed by the venom gland.

Its subcellular location is the secreted. Serine protease inhibitor. This chain is Kunitz-type serine protease inhibitor ki-VN, found in Vipera nikolskii (Nikolsky's adder).